A 639-amino-acid polypeptide reads, in one-letter code: MDGRVGLRASRRAAPTPRVAVRSSPRHRARVREQEPVVSAMSGSGLGKENKAGSSTPLRHRPNAFSELDNATPRVMLRKIIQNQPQVSPLALQTVQLEETEDARPEPPSQRTSSTVELQLPDLVPEDASVTTFRMTRKRKKLSISEFERAADKRLPQNQAHSTLDSTLVRSLRMSVGSVMAPDTVEKRGLLRRPQNHKAIDIAAFEGGVEQNMLQIKAQDYLVDLQTSSMTGTTTIRTDAEVVLNNTELFVEPQLGEQNLLAVEPQLSDSKTSAQRSNTSYPAHEKARLEGLVSRVSTDERRTLRFSEKDLITDHEHVDGITQKTPAKQGEEEQDHSQQNDPMEQFSESEEMAGTTEHHADAEYSEHSEKKLSRKAVSQLTAAQDAGVEMEMTPSEGGVAEGTEHQDSPKAELQMAGSPGGHSPASYSLEKPGAKPLKEAVEQTGEIERGTITGVLDAAEEEATDDESDKEDHESEEISMKTPMFVHAAAYRPQPVLSPPHPVKSASPELPPQPVRAKPVPKSSGAAQRKTREPEIASSLIKQIFSHYVKTPVTRDAYKIVEKCSERYFKQISSDLEAYSQHAGRKTVEMADVELLMRRQGLVTDKMPLHVLVERHLPLEYRKLLIPIAVSGNKVIPCK.

5 disordered regions span residues 1–64, 266–294, 307–451, 458–477, and 494–534; these read MDGR…RPNA, QLSDSKTSAQRSNTSYPAHEKARLEGLVS, SEKD…ERGT, AAEEEATDDESDKEDHESEE, and QPVL…TREP. Over residues 12-23 the composition is skewed to low complexity; that stretch reads RAAPTPRVAVRS. The interval 80 to 500 is flexible stalk domain; the sequence is IIQNQPQVSP…YRPQPVLSPP (421 aa). The segment covering 267–281 has biased composition (polar residues); that stretch reads LSDSKTSAQRSNTSY. Basic and acidic residues-rich tracts occupy residues 307–319, 329–338, 356–371, and 432–449; these read SEKDLITDHEHVD, QGEEEQDHSQ, TEHHADAEYSEHSEKK, and PGAKPLKEAVEQTGEIER. Residues 458–469 show a composition bias toward acidic residues; it reads AAEEEATDDESD.

It belongs to the CENP-T/CNN1 family. Component of the CENPA-CAD complex, composed of CENPI, CENPK, CENPL, CENPO, CENPP, CENPQ, CENPR and CENPS. The CENPA-CAD complex is probably recruited on centromeres by the CENPA-NAC complex, at least composed of CENPA, CENPC, CENPH, CENPM, CENPN, CENPT and CENPU. Identified in a centromeric complex containing histones H2A, H2B, H3 and H4, and at least CENPA, CENPB, CENPC, CENPT, CENPN, HJURP, SUPT16H, SSRP1 and RSF1. Interacts (via N-terminus) with the NDC80 complex. Heterodimer with CENPW; this dimer coassembles with CENPS-CENPX heterodimers at centromeres to form the tetrameric CENP-T-W-S-X complex.

It localises to the nucleus. Its subcellular location is the chromosome. It is found in the centromere. The protein resides in the kinetochore. Functionally, component of the CENPA-NAC (nucleosome-associated) complex, a complex that plays a central role in assembly of kinetochore proteins, mitotic progression and chromosome segregation. The CENPA-NAC complex recruits the CENPA-CAD (nucleosome distal) complex and may be involved in incorporation of newly synthesized CENPA into centromeres. Part of a nucleosome-associated complex that binds specifically to histone H3-containing nucleosomes at the centromere, as opposed to nucleosomes containing CENPA. Component of the heterotetrameric CENP-T-W-S-X complex that binds and supercoils DNA, and plays an important role in kinetochore assembly. CENPT has a fundamental role in kinetochore assembly and function. It is one of the inner kinetochore proteins, with most further proteins binding downstream. Required for normal chromosome organization and normal progress through mitosis. The chain is Centromere protein T (CENPT) from Gallus gallus (Chicken).